The primary structure comprises 293 residues: N-acetylmannosamine kinase (293 aa).

ATP-binding positions include 5–12 (AIDIGGTK) and 133–140 (GVGGGLVI). The Zn(2+) site is built by H157, C167, C169, and C174.

The protein belongs to the ROK (NagC/XylR) family. NanK subfamily. Homodimer.

The catalysed reaction is an N-acyl-D-mannosamine + ATP = an N-acyl-D-mannosamine 6-phosphate + ADP + H(+). Its pathway is amino-sugar metabolism; N-acetylneuraminate degradation; D-fructose 6-phosphate from N-acetylneuraminate: step 2/5. Functionally, catalyzes the phosphorylation of N-acetylmannosamine (ManNAc) to ManNAc-6-P. In Vibrio vulnificus (strain CMCP6), this protein is N-acetylmannosamine kinase.